Reading from the N-terminus, the 196-residue chain is Putative 3-methyladenine DNA glycosylase (196 aa).

The protein belongs to the DNA glycosylase MPG family.

The protein is Putative 3-methyladenine DNA glycosylase of Chlorobium phaeobacteroides (strain DSM 266 / SMG 266 / 2430).